Consider the following 326-residue polypeptide: Phosphate acyltransferase (326 aa).

Belongs to the PlsX family. Homodimer. Probably interacts with PlsY.

The protein resides in the cytoplasm. The catalysed reaction is a fatty acyl-[ACP] + phosphate = an acyl phosphate + holo-[ACP]. The protein operates within lipid metabolism; phospholipid metabolism. In terms of biological role, catalyzes the reversible formation of acyl-phosphate (acyl-PO(4)) from acyl-[acyl-carrier-protein] (acyl-ACP). This enzyme utilizes acyl-ACP as fatty acyl donor, but not acyl-CoA. This is Phosphate acyltransferase from Macrococcus caseolyticus (strain JCSC5402) (Macrococcoides caseolyticum).